A 567-amino-acid chain; its full sequence is Dihydrolipoyllysine-residue acetyltransferase component of pyruvate dehydrogenase complex (567 aa).

2 consecutive Lipoyl-binding domains span residues 2–75 (SKQI…LVLE) and 108–181 (IVEV…MRFE). Residues Lys-41 and Lys-147 each carry the N6-lipoyllysine modification. The segment covering 192 to 238 (SAPASTSAPQTAAPATTAQAPQAAAPDTTAQAPQAAAPDTTAQAAQS) has biased composition (low complexity). The segment at 192 to 249 (SAPASTSAPQTAAPATTAQAPQAAAPDTTAQAPQAAAPDTTAQAAQSNNNVSGLSQEQ) is disordered. The span at 239–249 (NNNVSGLSQEQ) shows a compositional bias: polar residues. One can recognise a Peripheral subunit-binding (PSBD) domain in the interval 258-295 (HATPVIRRLAREFGVNLDKVKGTGRKGRIVKEDIEAYV). Active-site residues include Cys-484, His-540, and Asp-544.

Belongs to the 2-oxoacid dehydrogenase family. As to quaternary structure, forms a 24-polypeptide structural core with octahedral symmetry. Requires (R)-lipoate as cofactor.

It carries out the reaction N(6)-[(R)-dihydrolipoyl]-L-lysyl-[protein] + acetyl-CoA = N(6)-[(R)-S(8)-acetyldihydrolipoyl]-L-lysyl-[protein] + CoA. Its function is as follows. The pyruvate dehydrogenase complex catalyzes the overall conversion of pyruvate to acetyl-CoA and CO(2). It contains multiple copies of three enzymatic components: pyruvate dehydrogenase (E1), dihydrolipoamide acetyltransferase (E2) and lipoamide dehydrogenase (E3). The chain is Dihydrolipoyllysine-residue acetyltransferase component of pyruvate dehydrogenase complex (aceF) from Haemophilus influenzae (strain ATCC 51907 / DSM 11121 / KW20 / Rd).